Here is a 248-residue protein sequence, read N- to C-terminus: Ureidoacrylate amidohydrolase RutB (248 aa).

Asp-41 (proton acceptor) is an active-site residue. The active site involves Lys-150. Cys-183 acts as the Nucleophile in catalysis.

Belongs to the isochorismatase family. RutB subfamily.

It catalyses the reaction (Z)-3-ureidoacrylate + H2O + H(+) = (Z)-3-aminoacrylate + NH4(+) + CO2. The catalysed reaction is (Z)-3-ureidoacrylate + H2O = (Z)-3-aminoacrylate + carbamate + H(+). The enzyme catalyses (Z)-2-methylureidoacrylate + H2O + H(+) = (Z)-2-methylaminoacrylate + NH4(+) + CO2. Functionally, hydrolyzes ureidoacrylate to form aminoacrylate and carbamate. The carbamate hydrolyzes spontaneously, thereby releasing one of the nitrogen atoms of the pyrimidine ring as ammonia and one of its carbon atoms as CO2. This chain is Ureidoacrylate amidohydrolase RutB, found in Stutzerimonas stutzeri (strain A1501) (Pseudomonas stutzeri).